The following is an 89-amino-acid chain: MTKGTQSFGMRHNKSHTICRRCGKRSFHIQKSTCACCGYPAAKTRSYNWGAKAKRRRTTGTGRMSYLKKVHRSFKNGFRAGKPTSAATA.

Cys-19, Cys-22, Cys-34, and Cys-37 together coordinate Zn(2+). A C4-type zinc finger spans residues 19 to 37 (CRRCGKRSFHIQKSTCACC).

It belongs to the eukaryotic ribosomal protein eL37 family. Component of the large ribosomal subunit (LSU). Mature yeast ribosomes consist of a small (40S) and a large (60S) subunit. The 40S small subunit contains 1 molecule of ribosomal RNA (18S rRNA) and at least 33 different proteins. The large 60S subunit contains 3 rRNA molecules (25S, 5.8S and 5S rRNA) and at least 46 different proteins. Zn(2+) is required as a cofactor.

It is found in the cytoplasm. Its function is as follows. Component of the ribosome, a large ribonucleoprotein complex responsible for the synthesis of proteins in the cell. The small ribosomal subunit (SSU) binds messenger RNAs (mRNAs) and translates the encoded message by selecting cognate aminoacyl-transfer RNA (tRNA) molecules. The large subunit (LSU) contains the ribosomal catalytic site termed the peptidyl transferase center (PTC), which catalyzes the formation of peptide bonds, thereby polymerizing the amino acids delivered by tRNAs into a polypeptide chain. The nascent polypeptides leave the ribosome through a tunnel in the LSU and interact with protein factors that function in enzymatic processing, targeting, and the membrane insertion of nascent chains at the exit of the ribosomal tunnel. In Schizosaccharomyces pombe (strain 972 / ATCC 24843) (Fission yeast), this protein is Large ribosomal subunit protein eL37A (rpl3703).